Reading from the N-terminus, the 188-residue chain is Large ribosomal subunit protein bL35m (188 aa).

Belongs to the bacterial ribosomal protein bL35 family.

The protein resides in the mitochondrion. This is Large ribosomal subunit protein bL35m (Mrpl35) from Mus musculus (Mouse).